The primary structure comprises 125 residues: Large ribosomal subunit protein bL19 (125 aa).

Belongs to the bacterial ribosomal protein bL19 family.

Functionally, this protein is located at the 30S-50S ribosomal subunit interface and may play a role in the structure and function of the aminoacyl-tRNA binding site. This is Large ribosomal subunit protein bL19 from Wolbachia pipientis subsp. Culex pipiens (strain wPip).